Reading from the N-terminus, the 252-residue chain is GPI alpha-1,4-mannosyltransferase I, stabilizing subunit (252 aa).

The N-terminal stretch at 1-22 (MAASALAWLLLWAAGLVGRLAA) is a signal peptide. Residues Asn97 and Asn209 are each glycosylated (N-linked (GlcNAc...) asparagine). A helical transmembrane segment spans residues 225 to 245 (VCSVTLLITVLCSTLILLAVF).

The protein belongs to the PIGX family. In terms of assembly, part of the glycosylphosphatidylinositol-mannosyltransferase I complex that is composed of PIGM and PIGX. Interacts with PIGM; PIGX stabilizes PIGM.

It localises to the endoplasmic reticulum membrane. It participates in glycolipid biosynthesis; glycosylphosphatidylinositol-anchor biosynthesis. Functionally, stabilizing subunit of the glycosylphosphatidylinositol-mannosyltransferase I complex which catalyzes the transfer of the first mannose, via an alpha-1,4 bond from a dolichol-phosphate-mannose (Dol-P-Man) to the glucosaminyl acyl phosphatidylinositol (GlcN-(acyl)PI) intermediate to generate alpha-D-Man-(1-&gt;4)-alpha-D-GlcN-(1-&gt;6)-(1-radyl,2-acyl-sn-glycero-3-phospho)-2-acyl-inositol and participates in the sixth step of the glycosylphosphatidylinositol-anchor biosynthesis. Probably acts by stabilizing the mannosyltransferase PIGM. In Rattus norvegicus (Rat), this protein is GPI alpha-1,4-mannosyltransferase I, stabilizing subunit.